We begin with the raw amino-acid sequence, 201 residues long: Superoxide dismutase [Mn] (201 aa).

The Mn(2+) site is built by His-27, His-81, Asp-163, and His-167.

It belongs to the iron/manganese superoxide dismutase family. In terms of assembly, homodimer. The cofactor is Mn(2+).

It carries out the reaction 2 superoxide + 2 H(+) = H2O2 + O2. Destroys superoxide anion radicals which are normally produced within the cells and which are toxic to biological systems. May play a critical role against oxidative stress, affecting both the survival and the virulence of S.pneumoniae. This chain is Superoxide dismutase [Mn] (sodA), found in Streptococcus pneumoniae serotype 4 (strain ATCC BAA-334 / TIGR4).